The primary structure comprises 367 residues: Peptide chain release factor 2 (367 aa).

Position 254 is an N5-methylglutamine (Gln254).

Belongs to the prokaryotic/mitochondrial release factor family. Methylated by PrmC. Methylation increases the termination efficiency of RF2.

Its subcellular location is the cytoplasm. In terms of biological role, peptide chain release factor 2 directs the termination of translation in response to the peptide chain termination codons UGA and UAA. The protein is Peptide chain release factor 2 of Janthinobacterium sp. (strain Marseille) (Minibacterium massiliensis).